The sequence spans 802 residues: Peptidyl serine alpha-galactosyltransferase (802 aa).

The signal sequence occupies residues 1–19; the sequence is MRWDLITAIVAALVVSVLA. Over 20–750 the chain is Extracellular; it reads DESGQMAPYR…SEGRFSTLKL (731 aa). 4 N-linked (GlcNAc...) asparagine glycosylation sites follow: N214, N275, N425, and N637. The interval 699-741 is disordered; that stretch reads RNCPEPGSESTEKISVSRKVGNIETKQTQGSDETKESSGSSES. The chain crosses the membrane as a helical span at residues 751–771; that stretch reads WVIALWLISGVGFLVVMLLVF. Residues 772–802 are Cytoplasmic-facing; the sequence is STRRGRGTTRGKGYRNKRRTSYSNTGFLDTK. The span at 777–791 shows a compositional bias: basic residues; that stretch reads RGTTRGKGYRNKRRT. The disordered stretch occupies residues 777 to 802; it reads RGTTRGKGYRNKRRTSYSNTGFLDTK. Residues 792-802 are compositionally biased toward polar residues; the sequence is SYSNTGFLDTK.

It localises to the endoplasmic reticulum membrane. Its function is as follows. Glycosyltransferase involved in the O-galactosylation of several proteins including extensins. Catalyzes the transfer of alpha-galactosyl to Ser residues. Hydroxylation of proline residues adjacent to the serine acceptor is required for activity. In Arabidopsis thaliana (Mouse-ear cress), this protein is Peptidyl serine alpha-galactosyltransferase.